The sequence spans 475 residues: Ankyrin repeat, SAM and basic leucine zipper domain-containing protein 1 (475 aa).

Serine 17, serine 18, and serine 20 each carry phosphoserine. ANK repeat units lie at residues 45–74 (EKNE…SVDT), 78–107 (YGWT…NASF), 110–144 (DKQT…DPNM), 148–177 (RLMT…DVNA), 181–210 (NGYT…NKMI), and 214–243 (DGKT…PLEG). The region spanning 272–334 (SYTAFGDLEI…KILAALKELE (63 aa)) is the SAM domain.

As to quaternary structure, interacts with DDX4, PIWIL1, RANBP9 and TDRD1.

It is found in the cytoplasm. Functionally, plays a central role during spermatogenesis by repressing transposable elements and preventing their mobilization, which is essential for the germline integrity. Acts via the piRNA metabolic process, which mediates the repression of transposable elements during meiosis by forming complexes composed of piRNAs and Piwi proteins and governs the methylation and subsequent repression of transposons. Its association with pi-bodies suggests a participation in the primary piRNAs metabolic process. Required prior to the pachytene stage to facilitate the production of multiple types of piRNAs, including those associated with repeats involved in the regulation of retrotransposons. May act by mediating protein-protein interactions during germ cell maturation. The protein is Ankyrin repeat, SAM and basic leucine zipper domain-containing protein 1 (ASZ1) of Atelerix albiventris (Middle-African hedgehog).